A 486-amino-acid chain; its full sequence is ATP synthase subunit beta (486 aa).

Residue 164 to 171 (GGAGVGKT) participates in ATP binding.

Belongs to the ATPase alpha/beta chains family. F-type ATPases have 2 components, CF(1) - the catalytic core - and CF(0) - the membrane proton channel. CF(1) has five subunits: alpha(3), beta(3), gamma(1), delta(1), epsilon(1). CF(0) has four main subunits: a(1), b(1), b'(1) and c(9-12).

Its subcellular location is the cellular thylakoid membrane. It carries out the reaction ATP + H2O + 4 H(+)(in) = ADP + phosphate + 5 H(+)(out). Produces ATP from ADP in the presence of a proton gradient across the membrane. The catalytic sites are hosted primarily by the beta subunits. The chain is ATP synthase subunit beta from Prochlorococcus marinus (strain MIT 9515).